A 401-amino-acid polypeptide reads, in one-letter code: Imidazolonepropionase (401 aa).

Fe(3+) is bound by residues His-66 and His-68. The Zn(2+) site is built by His-66 and His-68. Residues Arg-75, Tyr-138, and His-171 each contribute to the 4-imidazolone-5-propanoate site. Tyr-138 serves as a coordination point for N-formimidoyl-L-glutamate. Fe(3+) is bound at residue His-236. His-236 lines the Zn(2+) pocket. Position 239 (Gln-239) interacts with 4-imidazolone-5-propanoate. Asp-311 provides a ligand contact to Fe(3+). Position 311 (Asp-311) interacts with Zn(2+). Asn-313 and Gly-315 together coordinate N-formimidoyl-L-glutamate. Thr-316 lines the 4-imidazolone-5-propanoate pocket.

This sequence belongs to the metallo-dependent hydrolases superfamily. HutI family. The cofactor is Zn(2+). Requires Fe(3+) as cofactor.

The protein localises to the cytoplasm. It catalyses the reaction 4-imidazolone-5-propanoate + H2O = N-formimidoyl-L-glutamate. It participates in amino-acid degradation; L-histidine degradation into L-glutamate; N-formimidoyl-L-glutamate from L-histidine: step 3/3. In terms of biological role, catalyzes the hydrolytic cleavage of the carbon-nitrogen bond in imidazolone-5-propanoate to yield N-formimidoyl-L-glutamate. It is the third step in the universal histidine degradation pathway. This is Imidazolonepropionase from Pseudomonas syringae pv. tomato (strain ATCC BAA-871 / DC3000).